A 107-amino-acid polypeptide reads, in one-letter code: Thioredoxin (107 aa).

The Thioredoxin domain occupies 2-107; the sequence is DSIVHVTDDS…QLTAFLDSNX (106 aa). The cysteines at positions 32 and 35 are disulfide-linked.

Belongs to the thioredoxin family.

Participates in various redox reactions through the reversible oxidation of its active center dithiol to a disulfide and catalyzes dithiol-disulfide exchange reactions. The protein is Thioredoxin (trxA) of Allochromatium vinosum (Chromatium vinosum).